The primary structure comprises 1000 residues: Integrin alpha-PS5 (1000 aa).

7 FG-GAP repeats span residues 15–74, 75–137, 145–198, 199–261, 262–323, 324–379, and 386–448; these read KHLK…GSCS, HYVL…DTPP, SLIP…AAQG, SYAV…GEIV, RKLH…FKFE, KKII…GLRD, and DAPS…SESR. N-linked (GlcNAc...) asparagine glycosylation is present at N58. An N-linked (GlcNAc...) asparagine glycan is attached at N231. N516, N592, N622, N732, N771, N829, N842, N853, and N922 each carry an N-linked (GlcNAc...) asparagine glycan. A helical transmembrane segment spans residues 930–950; that stretch reads IWYIILSLIAGHLLLGAMTYI. At 951–1000 the chain is on the cytoplasmic side; sequence LYKLRFFKRGKKEELKRLLEEHRSETKEPATDCEGNQEEINVEMHSDLEN. Residues 971-980 show a composition bias toward basic and acidic residues; the sequence is EHRSETKEPA. A disordered region spans residues 971 to 1000; sequence EHRSETKEPATDCEGNQEEINVEMHSDLEN.

It belongs to the integrin alpha chain family. As to quaternary structure, heterodimer of an alpha and a beta subunit. Alpha-PS5 associates with beta-PS. Expressed in all follicle cells overlying the oocyte during mid-oogenesis, the strongest expression is observed in the cells covering the anterior end of the oocyte and in the cells forming the dorsal appendages. After completion of oocyte enlargement, expression in main body follicle cells is down-regulated but persists strongly in the dorsal appendage forming cells. Expressed in lamellocytes.

The protein resides in the membrane. In terms of biological role, possible role in cell-cell interactions. Minor involvement in the establishment of the oocyte anterior-posterior length. This Drosophila melanogaster (Fruit fly) protein is Integrin alpha-PS5.